Here is a 364-residue protein sequence, read N- to C-terminus: Aminomethyltransferase (364 aa).

The protein belongs to the GcvT family. As to quaternary structure, the glycine cleavage system is composed of four proteins: P, T, L and H.

It catalyses the reaction N(6)-[(R)-S(8)-aminomethyldihydrolipoyl]-L-lysyl-[protein] + (6S)-5,6,7,8-tetrahydrofolate = N(6)-[(R)-dihydrolipoyl]-L-lysyl-[protein] + (6R)-5,10-methylene-5,6,7,8-tetrahydrofolate + NH4(+). In terms of biological role, the glycine cleavage system catalyzes the degradation of glycine. The sequence is that of Aminomethyltransferase from Thermotoga maritima (strain ATCC 43589 / DSM 3109 / JCM 10099 / NBRC 100826 / MSB8).